We begin with the raw amino-acid sequence, 5537 residues long: Histone-lysine N-methyltransferase 2D (5537 aa).

Residues 1–60 (MDSQKLAGEDKDSEPAADGPAASEDPSATESDLPNPHVGEVSVLSSGSPRLQETPQDCSG) form a disordered region. Ser27 is subject to Phosphoserine. A compositionally biased stretch (polar residues) spans 43-57 (VLSSGSPRLQETPQD). The C2HC pre-PHD-type 1; degenerate zinc finger occupies 104 to 149 (GPNEAVLPSEDLSQIGFPEGLTPAHLGEPGGSCWAHHWCAAWSAGV). 3 consecutive PHD-type zinc fingers follow at residues 170 to 218 (QRCS…PEHS), 226 to 276 (EARC…CKVC), and 273 to 323 (CKVC…CRVC). The RING-type 1; atypical zinc finger occupies 229-274 (CAVCEGPGELCDLFFCTSCGHHYHGACLDTALTARKRAGWQCPECK). The RING-type 2; degenerate zinc finger occupies 276–321 (CQACRKPGNDSKMLVCETCDKGYHTFCLKPPMEELPAHSWKCKACR). 4 disordered regions span residues 368–387 (VCSR…EPDA), 393–416 (QGQP…QCEA), 436–1331 (EEMP…RLKS), and 1340–1359 (VVAD…DDDT). Residues 439–668 (PLLPPPEESP…VSRLSPPPEE (230 aa)) are 15 X 5 AA repeats of S/P-P-P-E/P-E/A. Pro residues predominate over residues 440–473 (LLPPPEESPLSPPPEESPTSPPPEASRLSPPPEE). Repeat copies occupy residues 442–446 (PPPEE), 460–464 (PPPEA), and 469–473 (PPPEE). Residues 474-483 (LPASPLPEAL) show a composition bias toward low complexity. The segment covering 494-509 (LSPPPEESPLSPPPES) has biased composition (pro residues). Tandem repeats lie at residues 496 to 500 (PPPEE) and 504 to 508 (SPPPE). Residues 510-519 (SPFSPLEESP) show a composition bias toward low complexity. Pro residues-rich tracts occupy residues 520-547 (LSPP…PLSP) and 554-595 (LSPP…PPPE). 5 consecutive repeat copies span residues 521–525 (SPPEE), 555–559 (SPPPE), 564–568 (SPPPE), 573–577 (SPPPE), and 582–586 (SPPPE). A compositionally biased stretch (low complexity) spans 596-607 (ASRLFPPFEESP). Residues 608-649 (LSPPPEESPLSPPPEASRLSPPPEDSPMSPPPEESPMSPPPE) are compositionally biased toward pro residues. 4 repeat units span residues 609-613 (SPPPE), 618-622 (SPPPE), 627-631 (SPPPE), and 645-649 (SPPPE). Residues 650 to 662 (VSRLSPLPVVSRL) show a composition bias toward low complexity. Residues 663-667 (SPPPE) form repeat 15. Residues 663–712 (SPPPEESPLSPPPEESPTSPPPEASRLSPPPEDSPTSPPPEDSPASPPPE) are compositionally biased toward pro residues. Residues 713–725 (DSLMSLPLEESPL) are compositionally biased toward low complexity. Ser744 is modified (phosphoserine). 2 stretches are compositionally biased toward basic and acidic residues: residues 745–760 (PRPE…EEPH) and 845–869 (RPEE…KPPE). Low complexity-rich tracts occupy residues 889 to 903 (PSLS…LSEP) and 911 to 928 (LPEE…LSPQ). Positions 929–940 (LMPPDPLPPPLS) are enriched in pro residues. Residues 941–954 (PIITAAAPPALSPL) are compositionally biased toward low complexity. Pro residues predominate over residues 994 to 1008 (EPVPPMILPPSPGSP). Low complexity predominate over residues 1048–1057 (PLSVPSPLSP). Residues 1068 to 1080 (AELHEMETEKVSE) are compositionally biased toward basic and acidic residues. Ser1151 carries the phosphoserine modification. Thr1195 is subject to Phosphothreonine. Positions 1207–1216 (EISNLSQGDA) are enriched in polar residues. At Ser1249 the chain carries Phosphoserine. Residue Thr1267 is modified to Phosphothreonine. Phosphoserine is present on Ser1270. 2 stretches are compositionally biased toward basic residues: residues 1289–1302 (GRRR…RIKQ) and 1310–1329 (GRRR…RARL). 3 PHD-type zinc fingers span residues 1377-1430 (QDMC…CIVC), 1427-1477 (CIVC…CVSC), and 1504-1559 (LVTC…CQPY). An RING-type 3; atypical zinc finger spans residues 1507–1557 (CPICHAPYVEEDLLIQCRHCERWMHAGCESLFTEDDVEQAADEGFDCVSCQ). Phosphoserine is present on Ser1606. 4 disordered regions span residues 1610–1767 (KRRQ…LEDM), 1793–1889 (GVGR…MESK), 1904–2002 (EQHL…NQRS), and 2165–2683 (PQVP…QRQR). A compositionally biased stretch (basic and acidic residues) spans 1637-1666 (PDDKKDGDLDTDELLKGEGGVEHMECEIKL). Ser1671 is subject to Phosphoserine. Residues 1675 to 1685 (EPGKEETEESK) are compositionally biased toward basic and acidic residues. Basic residues-rich tracts occupy residues 1702-1712 (RQRKSHTRTKK) and 1753-1762 (KQQRRGRKKS). Composition is skewed to basic and acidic residues over residues 1806 to 1825 (AKGD…KGDD) and 1832 to 1841 (EESRGLEGKA). Phosphoserine is present on residues Ser1820 and Ser1834. Residues Thr1843 and Thr1865 each carry the phosphothreonine modification. Residues 1874–1889 (DLDRISTEELPKMESK) are compositionally biased toward basic and acidic residues. Positions 1979–1990 (TTPSTPTTPTTE) are enriched in low complexity. A compositionally biased stretch (pro residues) spans 2190–2209 (PTAPPTYPPYPSPTGAPAQP). Ser2239 carries the phosphoserine modification. The residue at position 2240 (Thr2240) is a Phosphothreonine. Position 2246 is an N6-acetyllysine (Lys2246). 2 positions are modified to phosphoserine: Ser2260 and Ser2274. Residues 2280–2292 (ESRKALEVKKEEL) are compositionally biased toward basic and acidic residues. Residues Ser2309, Ser2311, and Ser2342 each carry the phosphoserine modification. Composition is skewed to pro residues over residues 2350-2365 (QEPP…PPSH) and 2379-2393 (AQPP…PPPE). Low complexity-rich tracts occupy residues 2409–2431 (SRVP…RPLS) and 2494–2505 (FPAALPAGPAGE). Asymmetric dimethylarginine is present on Arg2535. The segment covering 2547–2560 (LKPPVPQPGLPPPH) has biased composition (pro residues). The span at 2574–2584 (KPQSTNYTVAT) shows a compositional bias: polar residues. The segment covering 2589–2609 (PSGSPLGPSSGSTGESYGLSP) has biased composition (low complexity). Over residues 2610–2621 (LRPPSVLPPPAP) the composition is skewed to pro residues. Ser2640 is modified (phosphoserine). A coiled-coil region spans residues 2669–2707 (MSGLSQTELEKQRQRQRLRELLIRQQIQRNTLRQEKETA). An LXXLL motif 1 motif is present at residues 2686 to 2690 (LRELL). Disordered regions lie at residues 2697-2814 (RNTL…QQQQ) and 2835-2996 (ARFP…LDDD). The span at 2707-2722 (AAAAAGAVGPPGSWGA) shows a compositional bias: low complexity. Composition is skewed to polar residues over residues 2733–2746 (SRGQ…QDKS) and 2781–2790 (PSSMDVNSRQ). The residue at position 2836 (Arg2836) is an Asymmetric dimethylarginine. Positions 2931–2940 (PQKPSAPPAP) are enriched in pro residues. Positions 3038–3042 (LDDLL) match the LXXLL motif 2 motif. Positions 3078–3110 (EKAEREALLRGVEPGPLGPEERPPPAADASEPR) are disordered. An N6-acetyllysine modification is found at Lys3079. Position 3130 is a phosphoserine (Ser3130). 2 disordered regions span residues 3147 to 3209 (ANSL…GSSL) and 3263 to 3339 (KQQL…AHAL). A Phosphothreonine modification is found at Thr3197. 3 stretches are compositionally biased toward low complexity: residues 3198–3209 (PSPLSGPGGSSL), 3263–3289 (KQQL…LSAP), and 3301–3320 (GSSP…LAGA). Phosphoserine is present on Ser3199. Residues 3249 to 3282 (IEDLLEHEKKELQKKQQLSAQLQPAQQQQQQQQQ) adopt a coiled-coil conformation. The span at 3325–3334 (LPQPLMPTQP) shows a compositional bias: pro residues. Lys3433 is subject to N6-acetyllysine. Disordered regions lie at residues 3462-3499 (LSGG…TFAQ) and 3596-3673 (RNKQ…GPFL). Residues 3562–3614 (EKLKLVTEQQSKIQKQLDQVRKQQKEHTNLMAEYRNKQQQQQQQQQQQQQQHS) adopt a coiled-coil conformation. Low complexity-rich tracts occupy residues 3599-3612 (QQQQ…QQQQ) and 3631-3643 (LPGQ…GLQP). The stretch at 3714–3750 (RLLQERQLQLQQQRMQLAQKLQQQQQQQQQQQHLLGQ) forms a coiled coil. Arg3727 is modified (asymmetric dimethylarginine). Positions 3758–3802 (QQGPGVQTNQALGPKPQGLMPPSSHQGLLVQQLSPQPPQGPQGML) are disordered. Residues 3897–3975 (LQQLQQQQQL…FQQQQQQQQM (79 aa)) are a coiled coil. The tract at residues 3984 to 4191 (LLSPQQQQQQ…GQGLPGVGIM (208 aa)) is disordered. The span at 4012 to 4023 (PGALGPTLLLTG) shows a compositional bias: low complexity. Polar residues predominate over residues 4024-4045 (KEQNTVDPAVSSEATEGPSTHQ). Over residues 4073-4108 (SQLLLVQPQPQPQPSSLQLQPPLRLPGQQQQQVSLL) the composition is skewed to low complexity. Residues 4111–4120 (AGGGSHGQLG) show a composition bias toward gly residues. The span at 4137–4154 (PSVSLGDQPGSMTQNLLG) shows a compositional bias: polar residues. Arg4198 carries the asymmetric dimethylarginine modification. A Phosphoserine modification is found at Ser4215. The LXXLL motif 3 signature appears at 4222 to 4226 (LQALL). Disordered stretches follow at residues 4233–4398 (QSQA…VPGH) and 4410–4452 (ASQL…LLLA). Residues 4237–4251 (VRQTPPYQEPGTQTS) show a composition bias toward polar residues. The span at 4252–4282 (PLQGLLGCQPQLGGFPGPQTGPLQELGAGPR) shows a compositional bias: low complexity. Positions 4253–4257 (LQGLL) match the LXXLL motif 4 motif. Pro residues predominate over residues 4283-4293 (PQGPPRLPAPP). Low complexity-rich tracts occupy residues 4294–4305 (GALSTGPVLGPV) and 4320–4331 (PSQLPSPSSQLP). The segment covering 4338–4357 (PTHPGTPKPQGPTLEPPPGR) has biased composition (pro residues). Ser4359 bears the Phosphoserine mark. Residues 4463-4467 (LQKLL) carry the LXXLL motif 5 motif. At Lys4465 the chain carries N6-acetyllysine. Disordered stretches follow at residues 4503-4544 (QGTP…KEDG) and 4613-4727 (KNNL…HLGS). The segment covering 4619–4633 (PPTPPSSLPPTPPPS) has biased composition (pro residues). Positions 4648–4673 (LGEHPKDAASARDSERALRDTSEVKS) are enriched in basic and acidic residues. Position 4738 is a phosphoserine (Ser4738). Lys4756 participates in a covalent cross-link: Glycyl lysine isopeptide (Lys-Gly) (interchain with G-Cter in SUMO2). At Lys4776 the chain carries N6-acetyllysine. 2 positions are modified to phosphoserine: Ser4822 and Ser4849. Residues 4822–4857 (SPARAGTEPKKGEAEGPGGKEKGLEGKSPDTGPDWL) form a disordered region. Over residues 4828-4849 (TEPKKGEAEGPGGKEKGLEGKS) the composition is skewed to basic and acidic residues. Lys4880 is covalently cross-linked (Glycyl lysine isopeptide (Lys-Gly) (interchain with G-Cter in SUMO2)). The tract at residues 4905–4980 (QLSAPPPEEP…GEDSRPPRLK (76 aa)) is disordered. Residues 4908–4931 (APPPEEPSPPPSPLAPSPASPPTE) are compositionally biased toward pro residues. Over residues 4932–4941 (PLVELPTEPL) the composition is skewed to low complexity. Residues 4966 to 4976 (RPPEEGEDSRP) show a composition bias toward basic and acidic residues. An LXXLL motif 6 motif is present at residues 4990–4994 (LRLLL). The C2HC pre-PHD-type 2 zinc finger occupies 5029-5069 (MRRCCFCHEEGDGATDGPARLLNLDLDLWVHLNCALWSTEV). The segment at 5090-5137 (TKCSLCQRTGATSSCNRMRCPNVYHFACAIRAKCMFFKDKTMLCPMHK) adopts a PHD-type 7 zinc-finger fold. Residues 5175 to 5235 (LHMFRVGGLV…CCYRCSIGEN (61 aa)) form the FYR N-terminal domain. The 86-residue stretch at 5236-5321 (NGRPEFVIKV…ESCQNYLFRY (86 aa)) folds into the FYR C-terminal domain. Positions 5337–5342 (GCARSE) match the WDR5 interaction motif (WIN) motif. One can recognise an SET domain in the interval 5397–5513 (NNVYLARSRI…KGEELTYDYQ (117 aa)). S-adenosyl-L-methionine is bound by residues Tyr5451 and 5474–5475 (NH). Zn(2+) is bound by residues Cys5477, Cys5525, Cys5527, and Cys5532. The Post-SET domain occupies 5521 to 5537 (HKIPCHCGAWNCRKWMN).

It belongs to the class V-like SAM-binding methyltransferase superfamily. Histone-lysine methyltransferase family. TRX/MLL subfamily. As to quaternary structure, component of the MLL2 complex (also named ASCOM complex), at least composed of catalytic subunit KMT2D/MLL2, ASH2L, RBBP5, WDR5, NCOA6, DPY30, KDM6A, PAXIP1/PTIP, PAGR1 and alpha- and beta-tubulin. Forms a core complex with the evolutionary conserved subcomplex WRAD composed of WDR5, RBBP5, ASH2L/ASH2 and DPY30 subunits; WRAD differentially stimulates the methyltransferase activity. Interacts with ESR1; interaction is direct. Interacts (via WIN motif) with WDR5. As to expression, expressed in most adult tissues, including a variety of hematoipoietic cells, with the exception of the liver.

It is found in the nucleus. It catalyses the reaction L-lysyl(4)-[histone H3] + S-adenosyl-L-methionine = N(6)-methyl-L-lysyl(4)-[histone H3] + S-adenosyl-L-homocysteine + H(+). In terms of biological role, histone methyltransferase that catalyzes methyl group transfer from S-adenosyl-L-methionine to the epsilon-amino group of 'Lys-4' of histone H3 (H3K4). Part of chromatin remodeling machinery predominantly forms H3K4me1 methylation marks at active chromatin sites where transcription and DNA repair take place. Acts as a coactivator for estrogen receptor by being recruited by ESR1, thereby activating transcription. In Homo sapiens (Human), this protein is Histone-lysine N-methyltransferase 2D (KMT2D).